We begin with the raw amino-acid sequence, 180 residues long: Cytochrome b6-f complex subunit 4 (180 aa).

Helical transmembrane passes span 36-56, 95-115, and 131-151; these read LSYI…GLAV, LLGV…PFLE, and TVSL…ALPI.

This sequence belongs to the cytochrome b family. PetD subfamily. The 4 large subunits of the cytochrome b6-f complex are cytochrome b6, subunit IV (17 kDa polypeptide, petD), cytochrome f and the Rieske protein, while the 4 small subunits are petG, petL, petM and petN. The complex functions as a dimer.

It localises to the plastid. The protein resides in the chloroplast thylakoid membrane. In terms of biological role, component of the cytochrome b6-f complex, which mediates electron transfer between photosystem II (PSII) and photosystem I (PSI), cyclic electron flow around PSI, and state transitions. The polypeptide is Cytochrome b6-f complex subunit 4 (Pinus thunbergii (Japanese black pine)).